A 175-amino-acid chain; its full sequence is MLTIAKDQTQVNERIRAREIRVIGQDGEQIGVKQKREALEMAERVGLDLVVVAPNAKPPVARIMDYGKYKFEQQKKEKEMKKKQKVINVKEIRLSPTIEEHDFQTKLKNGRKFLNKGDKCKVSIRFRGRAITHKEIGQRVLEKFADECKDIATVEQRPKMEGRQMFIMLAPIAEK.

The protein belongs to the IF-3 family. As to quaternary structure, monomer.

The protein resides in the cytoplasm. In terms of biological role, IF-3 binds to the 30S ribosomal subunit and shifts the equilibrium between 70S ribosomes and their 50S and 30S subunits in favor of the free subunits, thus enhancing the availability of 30S subunits on which protein synthesis initiation begins. This chain is Translation initiation factor IF-3, found in Staphylococcus carnosus (strain TM300).